We begin with the raw amino-acid sequence, 488 residues long: Putative sugar transporter ERD6-like 13 (488 aa).

A run of 12 helical transmembrane segments spans residues 51-71, 89-109, 116-138, 151-171, 182-202, 207-227, 291-311, 324-344, 353-373, 390-410, 423-445, and 451-471; these read LILLFTTFTALCGTFSYGTAA, LAEFSFFGAVLTIGGLVGAAM, VFGRRGALGVSNSFCMAGWLMIA, LFLGVAAGVASYVVPVYIVEI, AINSLVMCASVAVTYLLGSVI, LALISTVPCVFEFVGLFFIPE, VGIGLLVLQQLGGLSGYTFYL, VGVMMASVVQSVTSVLGIVIV, LTVATIMMCLGSLITGLSFLF, GVLVFLTSITIGIGGIPWVMI, GTLCNLTSWSSNWFVSYTFNFLF, and GVFFIYTMISGVGILFVMKMV.

The protein belongs to the major facilitator superfamily. Sugar transporter (TC 2.A.1.1) family.

It is found in the membrane. Functionally, sugar transporter. The sequence is that of Putative sugar transporter ERD6-like 13 from Arabidopsis thaliana (Mouse-ear cress).